We begin with the raw amino-acid sequence, 256 residues long: uncharacterized protein (256 aa).

An N-terminal signal peptide occupies residues 1 to 22 (MNNFRQCALCIGTSVLILLVSG). Residue C23 is the site of N-palmitoyl cysteine attachment. Residue C23 is the site of S-diacylglycerol cysteine attachment.

Belongs to the staphylococcal tandem lipoprotein family.

The protein localises to the cell membrane. This is an uncharacterized protein from Staphylococcus aureus (strain bovine RF122 / ET3-1).